Consider the following 613-residue polypeptide: AP-5 complex subunit mu (613 aa).

The MHD domain occupies lysine 309 to valine 563. The tract at residues serine 501–glutamate 522 is disordered. Positions glycine 511–alanine 521 are enriched in acidic residues.

This sequence belongs to the adaptor complexes medium subunit family. Probably part of the adaptor protein complex 5 (AP-5).

The protein localises to the cytoplasmic vesicle membrane. The polypeptide is AP-5 complex subunit mu (AP5M) (Arabidopsis thaliana (Mouse-ear cress)).